We begin with the raw amino-acid sequence, 214 residues long: rRNA methyltransferase 2, mitochondrial (214 aa).

The N-terminal 18 residues, 1-18, are a transit peptide targeting the mitochondrion; it reads MFSTKKSQGNLHKYIQRQ. Residues 63–66, Asp-83, 100–101, and Asp-125 each bind S-adenosyl-L-methionine; these read PGSW and DI. The Proton acceptor role is filled by Lys-169.

The protein belongs to the class I-like SAM-binding methyltransferase superfamily. RNA methyltransferase RlmE family.

Its subcellular location is the mitochondrion. The catalysed reaction is a uridine in rRNA + S-adenosyl-L-methionine = a 2'-O-methyluridine in rRNA + S-adenosyl-L-homocysteine + H(+). Functionally, S-adenosyl-L-methionine-dependent 2'-O-ribose methyltransferase that catalyzes the formation of 2'-O-methyluridine at position 808 (Um808) in the mitochondrial large subunit ribosomal RNA (mtLSU rRNA), a universally conserved modification in the peptidyl transferase domain of the mtLSU rRNA. This activity may require prior 2'-O-methylguanosine modification at position 809 (Gm809) by MRM3. Essential for late-stage assembly of mtLSU required for efficient translation of mitochondrial DNA encoded proteins; methyltransferase activity is not required for this function. Essential for mitochondrial respiratory function. This Caenorhabditis elegans protein is rRNA methyltransferase 2, mitochondrial.